Reading from the N-terminus, the 416-residue chain is Chorismate synthase (416 aa).

2 residues coordinate NADP(+): arginine 40 and arginine 46. Residues 135-137 (RAS), 256-257 (QA), glycine 300, 315-319 (KPIAT), and arginine 341 contribute to the FMN site.

The protein belongs to the chorismate synthase family. As to quaternary structure, homotetramer. Requires FMNH2 as cofactor.

It carries out the reaction 5-O-(1-carboxyvinyl)-3-phosphoshikimate = chorismate + phosphate. It functions in the pathway metabolic intermediate biosynthesis; chorismate biosynthesis; chorismate from D-erythrose 4-phosphate and phosphoenolpyruvate: step 7/7. Catalyzes the anti-1,4-elimination of the C-3 phosphate and the C-6 proR hydrogen from 5-enolpyruvylshikimate-3-phosphate (EPSP) to yield chorismate, which is the branch point compound that serves as the starting substrate for the three terminal pathways of aromatic amino acid biosynthesis. This reaction introduces a second double bond into the aromatic ring system. The polypeptide is Chorismate synthase (Kocuria rhizophila (strain ATCC 9341 / DSM 348 / NBRC 103217 / DC2201)).